The primary structure comprises 437 residues: Adenylyltransferase and sulfurtransferase MOCS3 (437 aa).

ATP is bound by residues Gly-82, Asp-103, 110–114, Lys-127, and 171–172; these read TNLHR and DN. 2 residues coordinate Zn(2+): Cys-212 and Cys-215. Cys-229 acts as the Glycyl thioester intermediate; for adenylyltransferase activity in catalysis. Zn(2+) contacts are provided by Cys-287 and Cys-290. The 99-residue stretch at 337 to 435 folds into the Rhodanese domain; it reads SNVPHLLVDV…WTHNIDPEFP (99 aa). Cys-391 serves as the catalytic Cysteine persulfide intermediate; for sulfurtransferase activity.

It in the N-terminal section; belongs to the HesA/MoeB/ThiF family. UBA4 subfamily. It depends on Zn(2+) as a cofactor.

The protein localises to the cytoplasm. It localises to the cytosol. It carries out the reaction [molybdopterin-synthase sulfur-carrier protein]-C-terminal Gly-Gly + ATP + H(+) = [molybdopterin-synthase sulfur-carrier protein]-C-terminal Gly-Gly-AMP + diphosphate. It catalyses the reaction [molybdopterin-synthase sulfur-carrier protein]-C-terminal Gly-Gly-AMP + S-sulfanyl-L-cysteinyl-[cysteine desulfurase] + AH2 = [molybdopterin-synthase sulfur-carrier protein]-C-terminal-Gly-aminoethanethioate + L-cysteinyl-[cysteine desulfurase] + A + AMP + 2 H(+). It participates in tRNA modification; 5-methoxycarbonylmethyl-2-thiouridine-tRNA biosynthesis. Its pathway is cofactor biosynthesis; molybdopterin biosynthesis. Functionally, plays a central role in 2-thiolation of mcm(5)S(2)U at tRNA wobble positions of cytosolic tRNA(Lys), tRNA(Glu) and tRNA(Gln). Also essential during biosynthesis of the molybdenum cofactor. Acts by mediating the C-terminal thiocarboxylation of sulfur carriers URM1 and MOCS2A. Its N-terminus first activates URM1 and MOCS2A as acyl-adenylates (-COAMP), then the persulfide sulfur on the catalytic cysteine is transferred to URM1 and MOCS2A to form thiocarboxylation (-COSH) of their C-terminus. The reaction probably involves hydrogen sulfide that is generated from the persulfide intermediate and that acts as a nucleophile towards URM1 and MOCS2A. Subsequently, a transient disulfide bond is formed. Does not use thiosulfate as sulfur donor; NFS1 probably acting as a sulfur donor for thiocarboxylation reactions. In Aedes aegypti (Yellowfever mosquito), this protein is Adenylyltransferase and sulfurtransferase MOCS3.